The sequence spans 291 residues: Small ribosomal subunit biogenesis GTPase RsgA 2 (291 aa).

The region spanning E63–I221 is the CP-type G domain. GTP-binding positions include S112–D115 and G164–T172. Residues C245, C250, H252, and C258 each contribute to the Zn(2+) site.

The protein belongs to the TRAFAC class YlqF/YawG GTPase family. RsgA subfamily. Monomer. Associates with 30S ribosomal subunit, binds 16S rRNA. It depends on Zn(2+) as a cofactor.

Its subcellular location is the cytoplasm. Its function is as follows. One of several proteins that assist in the late maturation steps of the functional core of the 30S ribosomal subunit. Helps release RbfA from mature subunits. May play a role in the assembly of ribosomal proteins into the subunit. Circularly permuted GTPase that catalyzes slow GTP hydrolysis, GTPase activity is stimulated by the 30S ribosomal subunit. The protein is Small ribosomal subunit biogenesis GTPase RsgA 2 of Listeria monocytogenes serovar 1/2a (strain ATCC BAA-679 / EGD-e).